The chain runs to 1358 residues: DNA-directed RNA polymerase subunit beta (1358 aa).

Belongs to the RNA polymerase beta chain family. The RNAP catalytic core consists of 2 alpha, 1 beta, 1 beta' and 1 omega subunit. When a sigma factor is associated with the core the holoenzyme is formed, which can initiate transcription.

The catalysed reaction is RNA(n) + a ribonucleoside 5'-triphosphate = RNA(n+1) + diphosphate. Its function is as follows. DNA-dependent RNA polymerase catalyzes the transcription of DNA into RNA using the four ribonucleoside triphosphates as substrates. This chain is DNA-directed RNA polymerase subunit beta, found in Francisella tularensis subsp. novicida (strain U112).